The primary structure comprises 527 residues: Pyruvate kinase 1, cytosolic (527 aa).

Arginine 58 is a substrate binding site. Residues aspartate 60, serine 62, aspartate 92, and threonine 93 each contribute to the K(+) site. Position 60–63 (60–63) interacts with ATP; that stretch reads DFSW. Lysine 256 provides a ligand contact to substrate. Residue glutamate 258 coordinates Mg(2+). Glycine 281, asparagine 282, and threonine 313 together coordinate substrate. Asparagine 282 lines the Mg(2+) pocket.

This sequence belongs to the pyruvate kinase family. Homotetramer. It depends on Mg(2+) as a cofactor. K(+) serves as cofactor.

The protein resides in the cytoplasm. It is found in the cytosol. It catalyses the reaction pyruvate + ATP = phosphoenolpyruvate + ADP + H(+). The protein operates within carbohydrate degradation; glycolysis; pyruvate from D-glyceraldehyde 3-phosphate: step 5/5. Key regulatory enzyme of the glycolytic pathway that catalyzes the final step of glycolysis, converting ADP and phosphoenolpyruvate (PEP) to ATP and pyruvate by essentially irreversible transphosphorylation. Is critical for plant growth and development. This is Pyruvate kinase 1, cytosolic from Oryza sativa subsp. indica (Rice).